Reading from the N-terminus, the 68-residue chain is Riparin-1.5 amide (68 aa).

The signal sequence occupies residues Met1–Ala15. Residues Gln16–Arg41 constitute a propeptide that is removed on maturation. A disulfide bridge links Cys47 with Cys53. Cys53 is modified (cysteine amide). Positions Ser57–Glu68 are excised as a propeptide.

As to expression, expressed by the skin glands.

It localises to the secreted. This Crinia riparia (Streambank froglet) protein is Riparin-1.5 amide.